The primary structure comprises 953 residues: Communesin biosynthesis cluster-specific transcription factor cnsN (953 aa).

The segment at 371-418 (ELESTSPRTSHSSLSQDDTASLHSRSSLSSSPGRFPPSQKLVATSDSP) is disordered. Residues 374-408 (STSPRTSHSSLSQDDTASLHSRSSLSSSPGRFPPS) show a composition bias toward low complexity.

Its subcellular location is the nucleus. Its function is as follows. Transcriptional regulator; part of the gene cluster that mediates the biosynthesis of communesins, a prominent class of indole alkaloids with great potential as pharmaceuticals. The protein is Communesin biosynthesis cluster-specific transcription factor cnsN of Penicillium expansum (Blue mold rot fungus).